The sequence spans 343 residues: Protein RecA (343 aa).

An ATP-binding site is contributed by 68 to 75 (GPESGGKT).

Belongs to the RecA family.

The protein resides in the cytoplasm. Functionally, can catalyze the hydrolysis of ATP in the presence of single-stranded DNA, the ATP-dependent uptake of single-stranded DNA by duplex DNA, and the ATP-dependent hybridization of homologous single-stranded DNAs. It interacts with LexA causing its activation and leading to its autocatalytic cleavage. The sequence is that of Protein RecA from Syntrophus aciditrophicus (strain SB).